The chain runs to 186 residues: Interferon lambda-3 (186 aa).

Residues 1–21 (MVCYGVTIILVGTLGSLLVGA) form the signal peptide. 3 disulfide bridges follow: cysteine 31-cysteine 128, cysteine 65-cysteine 160, and cysteine 178-cysteine 185.

The protein belongs to the lambda interferon family.

It is found in the secreted. Functionally, cytokine which plays a critical role in the antiviral host defense, predominantly in the epithelial tissues. Acts as a ligand for the heterodimeric class II cytokine receptor composed of IL10RB and IFNLR1, and receptor engagement leads to the activation of the JAK/STAT signaling pathway resulting in the expression of IFN-stimulated genes (ISG), which mediate the antiviral state. Has a restricted receptor distribution and therefore restricted targets: is primarily active in epithelial cells and this cell type-selective action is because of the epithelial cell-specific expression of its receptor IFNLR1. Exhibits antiviral activity against the H5N1 influenza A virus. Induces the expression of the antiviral MX protein in epithelial-rich tissues, such as intestine, trachea and lung. The sequence is that of Interferon lambda-3 (IFNL3) from Gallus gallus (Chicken).